Reading from the N-terminus, the 436-residue chain is Chromosomal replication initiator protein DnaA (436 aa).

The interval 1 to 69 is domain I, interacts with DnaA modulators; it reads MLADEILELL…AYLYEVKTGK (69 aa). The segment at 69-99 is domain II; the sequence is KKPEVEITSQTKLKNIKQNQVNVKQIKAQSS. The domain III, AAA+ region stretch occupies residues 100 to 314; that stretch reads ILNPGYTFEN…GAIINLNAYA (215 aa). Residues Gly-144, Gly-146, Lys-147, and Thr-148 each coordinate ATP. Residues 315-436 form a domain IV, binds dsDNA region; it reads SLMRVEITLE…EIKNKILTKG (122 aa).

This sequence belongs to the DnaA family. In terms of assembly, oligomerizes as a right-handed, spiral filament on DNA at oriC.

Its subcellular location is the cytoplasm. Its function is as follows. Plays an essential role in the initiation and regulation of chromosomal replication. ATP-DnaA binds to the origin of replication (oriC) to initiate formation of the DNA replication initiation complex once per cell cycle. Binds the DnaA box (a 9 base pair repeat at the origin) and separates the double-stranded (ds)DNA. Forms a right-handed helical filament on oriC DNA; dsDNA binds to the exterior of the filament while single-stranded (ss)DNA is stabiized in the filament's interior. The ATP-DnaA-oriC complex binds and stabilizes one strand of the AT-rich DNA unwinding element (DUE), permitting loading of DNA polymerase. After initiation quickly degrades to an ADP-DnaA complex that is not apt for DNA replication. Binds acidic phospholipids. The chain is Chromosomal replication initiator protein DnaA from Campylobacter concisus (strain 13826).